The primary structure comprises 468 residues: MTQQIGVIGLAVMGKNLAWNIESRGYSVSVFNRSSEKTDLMVEESKGKNIHPTYSLEEFVNSLEKPRKILLMVQAGKATDATIDSLLPLLDDGDILIDGGNTNYQDTIRRNKALAQSAINFIGMGVSGGEIGALTGPSLMPGGQEEAYNKVADILDAIAAKAKDGASCVTYIGPNGAGHYVKMVHNGIEYADMQLIAESYAMMKELLGMSHEDIAQTFKDWNAGELESYLIEITGDIFMKLDENKEALVEKILDTAGQKGTGKWTSINALELGIPLTIITESVFARFISSIKEERVNASKELNGPKASFDGDKKDFLEKIRKALYMSKICSYAQGFAQMRKASEDNEWNLKLGDLAMIWREGCIIRAQFLQKIKDAYDNNPGLQNLLLDPYFKNIVTEYQDALRDVVATGVQNGVPTPGFSSSINYYDSYRAADLPANLIQAQRDYFGAHTYERKDKEGVFHTQWIEE.

NADP(+) is bound by residues Gly9–Gly14, Asn32–Ser34, Val73–Ala75, and Asn101. Substrate contacts are provided by residues Asn101 and Ser127–Gly129. Residue Lys182 is the Proton acceptor of the active site. Substrate is bound at residue His185–Asn186. The Proton donor role is filled by Glu189. Substrate is bound by residues Tyr190, Lys259, Arg286, Arg444, and His450.

Belongs to the 6-phosphogluconate dehydrogenase family. Homodimer.

It catalyses the reaction 6-phospho-D-gluconate + NADP(+) = D-ribulose 5-phosphate + CO2 + NADPH. The protein operates within carbohydrate degradation; pentose phosphate pathway; D-ribulose 5-phosphate from D-glucose 6-phosphate (oxidative stage): step 3/3. Catalyzes the oxidative decarboxylation of 6-phosphogluconate to ribulose 5-phosphate and CO(2), with concomitant reduction of NADP to NADPH. The polypeptide is 6-phosphogluconate dehydrogenase, decarboxylating (gnd) (Staphylococcus aureus (strain COL)).